The primary structure comprises 380 residues: MLLSIGMLMLSATQVYTILTVQLFAFLNLLPVEADILAYNFENASQTFDDLPARFGYRLPAEGLKGFLINSKPENACEPIVPPPVRDNSSGTFIVLIRRLDCNFDEKVLNAQRAGYKAAIVHNVDSDDLISMGSNDIEVLKKIDIPSVFIGESSANSLKDEFTYEKGGHIILVPEFSLPLEYYLIPFLIIVGICLILIVIFMITKFVQDRHRARRNRLRKDQLKKLPVHKFKKGDEYDVCAICLDEYEDGDKLRILPCSHAYHCKCVDPWLTKTKKTCPVCKQKVVPSQGDSDSDTDSSQEENEVSEHTPLLRPLASASTQSFGALSESRSHQNMTESSDYEEDDNDTDSSDAENEINEHSVVVQLQPNGERDYNIANTV.

The signal sequence occupies residues 1-34; sequence MLLSIGMLMLSATQVYTILTVQLFAFLNLLPVEA. Topologically, residues 35-182 are lumenal; sequence DILAYNFENA…VPEFSLPLEY (148 aa). The PA domain maps to 65–160; sequence KGFLINSKPE…GESSANSLKD (96 aa). The N-linked (GlcNAc...) asparagine glycan is linked to asparagine 88. A helical transmembrane segment spans residues 183-203; sequence YLIPFLIIVGICLILIVIFMI. The Cytoplasmic segment spans residues 204–380; the sequence is TKFVQDRHRA…ERDYNIANTV (177 aa). Residues 240 to 282 form an RING-type; atypical zinc finger; that stretch reads CAICLDEYEDGDKLRILPCSHAYHCKCVDPWLTKTKKTCPVCK. The disordered stretch occupies residues 285 to 380; the sequence is VVPSQGDSDS…ERDYNIANTV (96 aa). 2 stretches are compositionally biased toward acidic residues: residues 292–304 and 339–356; these read SDSD…EENE and SDYE…AENE.

As to quaternary structure, interacts with ERN1. Post-translationally, autoubiquitinated.

The protein resides in the endoplasmic reticulum membrane. It is found in the late endosome membrane. The protein localises to the lysosome membrane. Its subcellular location is the nucleus inner membrane. It catalyses the reaction S-ubiquitinyl-[E2 ubiquitin-conjugating enzyme]-L-cysteine + [acceptor protein]-L-lysine = [E2 ubiquitin-conjugating enzyme]-L-cysteine + N(6)-ubiquitinyl-[acceptor protein]-L-lysine.. It participates in protein modification; protein ubiquitination. Functionally, E3 ubiquitin-protein ligase that regulates cell proliferation. Involved in apoptosis regulation. Mediates ER stress-induced activation of JNK signaling pathway and apoptosis by promoting ERN1 activation and splicing of XBP1 mRNA. Also involved in protein trafficking and localization. This is E3 ubiquitin-protein ligase RNF13 (RNF13) from Bos taurus (Bovine).